A 336-amino-acid polypeptide reads, in one-letter code: Dihydroorotate dehydrogenase (quinone) (336 aa).

FMN-binding positions include 62-66 and threonine 86; that span reads AGLDK. Residue lysine 66 coordinates substrate. 111-115 contacts substrate; sequence NRMGF. FMN is bound by residues asparagine 139 and asparagine 172. Asparagine 172 contributes to the substrate binding site. The active-site Nucleophile is serine 175. Asparagine 177 contributes to the substrate binding site. FMN contacts are provided by lysine 217 and threonine 245. 246–247 serves as a coordination point for substrate; it reads NT. Residues glycine 268, glycine 297, and 318 to 319 contribute to the FMN site; that span reads YS.

Belongs to the dihydroorotate dehydrogenase family. Type 2 subfamily. In terms of assembly, monomer. FMN serves as cofactor.

It localises to the cell membrane. It carries out the reaction (S)-dihydroorotate + a quinone = orotate + a quinol. The protein operates within pyrimidine metabolism; UMP biosynthesis via de novo pathway; orotate from (S)-dihydroorotate (quinone route): step 1/1. Functionally, catalyzes the conversion of dihydroorotate to orotate with quinone as electron acceptor. This is Dihydroorotate dehydrogenase (quinone) from Vibrio atlanticus (strain LGP32) (Vibrio splendidus (strain Mel32)).